The sequence spans 751 residues: Valine--tRNA ligase (751 aa).

Residue K520 coordinates ATP.

The protein belongs to the class-I aminoacyl-tRNA synthetase family. ValS type 2 subfamily.

The protein resides in the cytoplasm. The enzyme catalyses tRNA(Val) + L-valine + ATP = L-valyl-tRNA(Val) + AMP + diphosphate. Its function is as follows. Catalyzes the attachment of valine to tRNA(Val). As ValRS can inadvertently accommodate and process structurally similar amino acids such as threonine, to avoid such errors, it has a 'posttransfer' editing activity that hydrolyzes mischarged Thr-tRNA(Val) in a tRNA-dependent manner. This Nanoarchaeum equitans (strain Kin4-M) protein is Valine--tRNA ligase (valS).